The primary structure comprises 232 residues: Clarin-1 (232 aa).

A helical transmembrane segment spans residues 8 to 28 (IIFCMAGVFSFACALGVVTAL). N48 is a glycosylation site (N-linked (GlcNAc...) asparagine). The next 3 helical transmembrane spans lie at 101–121 (VILF…FFMY), 135–155 (LGLY…MILF), and 186–206 (TTSF…GLLI).

This sequence belongs to the clarin family. Widely expressed. Found in the retina.

The protein resides in the cell membrane. May have a role in the excitatory ribbon synapse junctions between hair cells and cochlear ganglion cells and presumably also in analogous synapses within the retina. The chain is Clarin-1 (CLRN1) from Homo sapiens (Human).